Reading from the N-terminus, the 727-residue chain is Bromodomain-containing protein C631.02 (727 aa).

Disordered stretches follow at residues 27 to 231 and 341 to 369; these read AATI…PPMT and TSYS…AAMY. The span at 56-68 shows a compositional bias: acidic residues; the sequence is ENDDGTLDLFGDS. Basic and acidic residues predominate over residues 69 to 78; the sequence is ELEKEQKGDN. Over residues 102–114 the composition is skewed to polar residues; sequence PSSPTHPSVSNIT. Positions 128-150 are enriched in basic and acidic residues; that stretch reads EEEKSSESLDSHTHPPKRVRNED. The segment covering 153–177 has biased composition (polar residues); sequence LTFSKTSPVSPSSLKDGASNTVTND. At Ser-162 the chain carries Phosphoserine. Positions 206–231 are enriched in basic and acidic residues; sequence SKEHSSPHDETVKKEENDKDQYPPMT. One can recognise a Bromo 1 domain in the interval 229 to 335; the sequence is PMTKEQHKYI…ATFERQLKQL (107 aa). The region spanning 388 to 497 is the Bromo 2 domain; it reads RKDAAEMKFC…SIFQKLWANK (110 aa). The 81-residue stretch at 570–650 folds into the NET domain; the sequence is RSLSVDIYPP…KGDEIGAEAL (81 aa). Residues 699–727 are disordered; it reads IAAYNTKSLGSDDSSSEDDGESSESSDSA. Residues 712–727 are compositionally biased toward acidic residues; sequence SSSEDDGESSESSDSA.

Belongs to the BET family.

The protein resides in the nucleus. The polypeptide is Bromodomain-containing protein C631.02 (Schizosaccharomyces pombe (strain 972 / ATCC 24843) (Fission yeast)).